A 519-amino-acid chain; its full sequence is Putative glucosylceramidase 4 (519 aa).

The first 24 residues, 1–24 (MILNISVSLLIFLAFYGFSSDAKS), serve as a signal peptide directing secretion. Glutamate 256 functions as the Proton donor in the catalytic mechanism. Glutamate 361 (nucleophile) is an active-site residue.

This sequence belongs to the glycosyl hydrolase 30 family.

It catalyses the reaction a beta-D-glucosylceramide + H2O = an N-acyl-sphingoid base + D-glucose. The enzyme catalyses a beta-D-glucosyl-(1&lt;-&gt;1')-N-acylsphing-4-enine + H2O = an N-acylsphing-4-enine + D-glucose. It carries out the reaction an N-acyl-1-beta-D-glucosyl-15-methylhexadecasphing-4-enine + H2O = an N-acyl-15-methylhexadecasphing-4-enine + D-glucose. It participates in lipid metabolism; sphingolipid metabolism. Glucosylceramidase that catalyzes the hydrolysis of glucosylceramides into free ceramides and glucose. C.elegans contains specific sphingoid bases, which are unique or different in structure compared to the sphingoid bases found in other animals. Two examples of these distinctive compounds are: 15-methylhexadecasphinganine and 15-methylhexadecasphing-4-enine. This chain is Putative glucosylceramidase 4 (gba-4), found in Caenorhabditis elegans.